The chain runs to 251 residues: Pyridoxine 5'-phosphate synthase (251 aa).

Asparagine 7 lines the 3-amino-2-oxopropyl phosphate pocket. Aspartate 9–histidine 10 lines the 1-deoxy-D-xylulose 5-phosphate pocket. A 3-amino-2-oxopropyl phosphate-binding site is contributed by arginine 18. Histidine 43 (proton acceptor) is an active-site residue. Positions 45 and 50 each coordinate 1-deoxy-D-xylulose 5-phosphate. Glutamate 73 serves as the catalytic Proton acceptor. Threonine 103 is a binding site for 1-deoxy-D-xylulose 5-phosphate. The active-site Proton donor is the histidine 197. 3-amino-2-oxopropyl phosphate contacts are provided by residues glycine 198 and glycine 219–histidine 220.

This sequence belongs to the PNP synthase family. Homooctamer; tetramer of dimers.

Its subcellular location is the cytoplasm. It carries out the reaction 3-amino-2-oxopropyl phosphate + 1-deoxy-D-xylulose 5-phosphate = pyridoxine 5'-phosphate + phosphate + 2 H2O + H(+). It participates in cofactor biosynthesis; pyridoxine 5'-phosphate biosynthesis; pyridoxine 5'-phosphate from D-erythrose 4-phosphate: step 5/5. Catalyzes the complicated ring closure reaction between the two acyclic compounds 1-deoxy-D-xylulose-5-phosphate (DXP) and 3-amino-2-oxopropyl phosphate (1-amino-acetone-3-phosphate or AAP) to form pyridoxine 5'-phosphate (PNP) and inorganic phosphate. This is Pyridoxine 5'-phosphate synthase from Caulobacter sp. (strain K31).